We begin with the raw amino-acid sequence, 435 residues long: MRRYLRVVGLCLACGFCSLLYAFSQLAVSLEEGAAVGRRPQAAVASWLADGGRGTGRGAGSAGPGRTGRCKEVSLSYWNPYWMLPSDVCGVNCFWEAAFRYGLKTRPTEKMHLAVVACGDRLEETVTMLKSALIFSIKPLHVHIFAEDQLHDSFKDRLDSWSFLQRFNYSLYPITFPSDSAMEWKKLFKPCASQRLFLPLILKGVDSLLYVDTDVLFLRPVDDIWSLLERFNSTQIAAMAPEHEEPRVGWYNRFARHPYYGRTGVNSGVMLMNMTRMRRKYFKNDMTTARLQWGDILMPLLKKYKLNITWGDQDLLNIMFYHNPESLFVFPCQWNYRPDHCIYGSNCREAEEEGVFILHGNRGVYHDDKQPAFRAMYEALRNCSLEDDSVRSLLKPLELELQKTVHTYCGKTYKIFIKQLAKSIRNRYDTPPKER.

Residues 1–6 (MRRYLR) are Cytoplasmic-facing. Residues 7 to 29 (VVGLCLACGFCSLLYAFSQLAVS) form a helical; Signal-anchor for type II membrane protein membrane-spanning segment. Over 30 to 435 (LEEGAAVGRR…NRYDTPPKER (406 aa)) the chain is Lumenal. N-linked (GlcNAc...) asparagine glycosylation is found at Asn-168 and Asn-232.

The protein belongs to the glycosyltransferase 8 family.

The protein localises to the membrane. It catalyses the reaction 3-O-(beta-D-glucosyl)-L-seryl-[EGF-like domain protein] + UDP-alpha-D-xylose = 3-O-[alpha-D-xylosyl-(1-&gt;3)-beta-D-glucosyl]-L-seryl-[EGF-like domain protein] + UDP + H(+). In terms of biological role, glycosyltransferase which elongates the O-linked glucose attached to EGF-like repeats in the extracellular domain of Notch proteins by catalyzing the addition of xylose. The polypeptide is Glucoside xylosyltransferase 1 (Gxylt1) (Rattus norvegicus (Rat)).